Consider the following 982-residue polypeptide: Polyribonucleotide nucleotidyltransferase 2, mitochondrial (982 aa).

Residues 1–39 (MSMAVASLRLLARGGRRRARFPAPLSVPGGRAAFLSGAA) constitute a mitochondrion transit peptide. Positions 624–678 (PRLATLSFSSDSLRKLLFHRKKIEQETGARVSVSDGTVTIVAKTQPIMDKAIEKV) constitute a KH domain. The S1 motif 1 domain maps to 689–757 (GRTYKGVVSS…LRGNIKLSLK (69 aa)). Disordered regions lie at residues 792 to 814 (PSKDANAEPSISKDEDNMIEETP) and 832 to 892 (QDVT…NDVL). Composition is skewed to low complexity over residues 846 to 855 (AKSSPKLSKP) and 868 to 877 (KKTSGASTTA). Positions 920–982 (GDVVTAKVYQ…KGIPVFSLLD (63 aa)) constitute an S1 motif 2 domain.

This sequence belongs to the polyribonucleotide nucleotidyltransferase family.

It localises to the mitochondrion. The enzyme catalyses RNA(n+1) + phosphate = RNA(n) + a ribonucleoside 5'-diphosphate. In terms of biological role, involved in the 3'-end maturation of mitochondrial mRNAs, rRNAs and tRNAs. Functions as a poly(A) mRNA 3'-5' degrading phosphorylase. The chain is Polyribonucleotide nucleotidyltransferase 2, mitochondrial (PNP2) from Oryza sativa subsp. japonica (Rice).